Here is a 121-residue protein sequence, read N- to C-terminus: UPF0145 protein SGR_4080 (121 aa).

Belongs to the UPF0145 family.

The polypeptide is UPF0145 protein SGR_4080 (Streptomyces griseus subsp. griseus (strain JCM 4626 / CBS 651.72 / NBRC 13350 / KCC S-0626 / ISP 5235)).